We begin with the raw amino-acid sequence, 519 residues long: MAGYKPVSIQTYPVLGEKITQDTLYWNNYKTPVQIKEFGAVSKVDFSPQPPYNYAVTASSRIHIYGRYSQEPIKTFSRFKDTAYCATFRQDGRLLVAGSEDGGVQLFDISGRAPLRQFEGHTKAVHSVDFTADKYHVVSGADDYTVKLWDIPNSKEILTFKEHSDYVRCGCASKLNTDLFVTGSYDHTVKMFDARTNQSVISVEHGQPVESVLLFPSGGLLVSAGGRYVKVWDMLKGGQLLVSLKNHHKTVTCLCLSSSGQRLLSGSLDRKVKVYSTTSYKVVHSFDYTASILSLALAHEDETIVVGMTNGILSVKHRKSEAKKDSVPRRRRPAYRTFIKGKNYMKQQDDILINRPSKKHLELYDRDLKNFRISKALDRVLEPTCTIKTPEVTVSIIKELNRRGVLANALAGRDEKEISRVLNFLIRNLSQPRFAPVLINAAEIIIDIYLPVIGQSPVVDKKFLILQGLVEKEIDYQRELLETLGMMDMLFATMTRKESTSVLQHNTSDGFLENNKIES.

An N-acetylalanine modification is found at Ala-2. WD repeat units follow at residues 36–75 (KEFGAVSKVDFSPQPPYNYAVTASSRIHIYGRYSQEPIKT), 78–117 (RFKDTAYCATFRQDGRLLVAGSEDGGVQLFDISGRAPLRQ), 120–159 (GHTKAVHSVDFTADKYHVVSGADDYTVKLWDIPNSKEILT), 162–202 (EHSD…SVIS), 204–242 (EHGQPVESVLLFPSGGLLVSAGGRYVKVWDMLKGGQLLV), 246–285 (NHHKTVTCLCLSSSGQRLLSGSLDRKVKVYSTTSYKVVHS), and 287–326 (DYTASILSLALAHEDETIVVGMTNGILSVKHRKSEAKKDS). Lys-249 participates in a covalent cross-link: Glycyl lysine isopeptide (Lys-Gly) (interchain with G-Cter in SUMO2).

As to quaternary structure, part of the small subunit (SSU) processome, composed of more than 70 proteins and the RNA chaperone small nucleolar RNA (snoRNA) U3. May be a component of the proposed t-UTP subcomplex of the ribosomal small subunit (SSU) processome containing at least UTP4, WDR43, HEATR1, UTP15, WDR75. Interacts directly with UTP4 and WDR43.

The protein localises to the nucleus. It is found in the nucleolus. Its function is as follows. Ribosome biogenesis factor. Involved in nucleolar processing of pre-18S ribosomal RNA. Required for optimal pre-ribosomal RNA transcription by RNA polymerase I. Part of the small subunit (SSU) processome, first precursor of the small eukaryotic ribosomal subunit. During the assembly of the SSU processome in the nucleolus, many ribosome biogenesis factors, an RNA chaperone and ribosomal proteins associate with the nascent pre-rRNA and work in concert to generate RNA folding, modifications, rearrangements and cleavage as well as targeted degradation of pre-ribosomal RNA by the RNA exosome. The polypeptide is U3 small nucleolar RNA-associated protein 15 homolog (Bos taurus (Bovine)).